A 740-amino-acid polypeptide reads, in one-letter code: Glycerol dehydrogenase large subunit (740 aa).

The first 29 residues, 1 to 29 (MRRPYLLATAAGLALACSPLIAHAQFAPA), serve as a signal peptide directing secretion. Disordered stretches follow at residues 28–105 (PAGA…GDWV) and 442–468 (LPVEERPAPSPGVIPGDPRSPTQPWSV). Low complexity predominate over residues 34–43 (EPSSSVPGPG). Over residues 46 to 58 (SEPTENSPKSQSY) the composition is skewed to polar residues.

It belongs to the bacterial PQQ dehydrogenase family. Pyrroloquinoline quinone serves as cofactor.

The protein resides in the secreted. The enzyme catalyses glycerol + A = dihydroxyacetone + AH2. Catalyzes the oxidation of glycerol to glycerone. Also acts, more slowly, on a number of other polyols including D-sorbitol, D-arabinitol, D-mannitol, meso-erythritol, adonitol and propylene glycol. The polypeptide is Glycerol dehydrogenase large subunit (sldA) (Gluconobacter thailandicus).